The sequence spans 261 residues: 3-methyl-2-oxobutanoate hydroxymethyltransferase (261 aa).

Mg(2+)-binding residues include Asp-44 and Asp-83. 3-methyl-2-oxobutanoate-binding positions include 44–45 (DS), Asp-83, and Lys-112. Residue Glu-114 coordinates Mg(2+). Glu-181 acts as the Proton acceptor in catalysis.

The protein belongs to the PanB family. As to quaternary structure, homodecamer; pentamer of dimers. The cofactor is Mg(2+).

The protein localises to the cytoplasm. It catalyses the reaction 3-methyl-2-oxobutanoate + (6R)-5,10-methylene-5,6,7,8-tetrahydrofolate + H2O = 2-dehydropantoate + (6S)-5,6,7,8-tetrahydrofolate. The protein operates within cofactor biosynthesis; (R)-pantothenate biosynthesis; (R)-pantoate from 3-methyl-2-oxobutanoate: step 1/2. Catalyzes the reversible reaction in which hydroxymethyl group from 5,10-methylenetetrahydrofolate is transferred onto alpha-ketoisovalerate to form ketopantoate. In Acidithiobacillus ferrooxidans (strain ATCC 23270 / DSM 14882 / CIP 104768 / NCIMB 8455) (Ferrobacillus ferrooxidans (strain ATCC 23270)), this protein is 3-methyl-2-oxobutanoate hydroxymethyltransferase.